Reading from the N-terminus, the 152-residue chain is Large ribosomal subunit protein bL9 (152 aa).

The protein belongs to the bacterial ribosomal protein bL9 family.

Binds to the 23S rRNA. In Mycobacterium leprae (strain Br4923), this protein is Large ribosomal subunit protein bL9.